The chain runs to 224 residues: Ribonuclease HII (224 aa).

The 219-residue stretch at 1–219 (MMIAGIDEAG…VENIREELKK (219 aa)) folds into the RNase H type-2 domain. A divalent metal cation contacts are provided by Asp7, Glu8, and Asp105.

It belongs to the RNase HII family. It depends on Mn(2+) as a cofactor. Mg(2+) is required as a cofactor.

The protein resides in the cytoplasm. It carries out the reaction Endonucleolytic cleavage to 5'-phosphomonoester.. Its function is as follows. Endonuclease that specifically degrades the RNA of RNA-DNA hybrids. In Methanosarcina barkeri (strain Fusaro / DSM 804), this protein is Ribonuclease HII.